The chain runs to 104 residues: Pole-localizer protein TmaR (104 aa).

2 coiled-coil regions span residues 7–34 and 76–96; these read IVNQ…NRKR and SAEI…LTEE.

It belongs to the pole-localizer TmaR family.

Its subcellular location is the cytoplasm. Functionally, pole-localizer protein involved in the regulation of several cellular processes. The protein is Pole-localizer protein TmaR of Vibrio campbellii (strain ATCC BAA-1116).